Here is a 668-residue protein sequence, read N- to C-terminus: 1-deoxy-D-xylulose-5-phosphate synthase (668 aa).

Residues histidine 105 and 146–148 (AHS) contribute to the thiamine diphosphate site. Aspartate 177 lines the Mg(2+) pocket. Thiamine diphosphate-binding positions include 178 to 179 (GA), asparagine 206, tyrosine 316, and glutamate 398. Asparagine 206 contributes to the Mg(2+) binding site.

This sequence belongs to the transketolase family. DXPS subfamily. Homodimer. The cofactor is Mg(2+). Thiamine diphosphate serves as cofactor.

The catalysed reaction is D-glyceraldehyde 3-phosphate + pyruvate + H(+) = 1-deoxy-D-xylulose 5-phosphate + CO2. Its pathway is metabolic intermediate biosynthesis; 1-deoxy-D-xylulose 5-phosphate biosynthesis; 1-deoxy-D-xylulose 5-phosphate from D-glyceraldehyde 3-phosphate and pyruvate: step 1/1. Its function is as follows. Catalyzes the acyloin condensation reaction between C atoms 2 and 3 of pyruvate and glyceraldehyde 3-phosphate to yield 1-deoxy-D-xylulose-5-phosphate (DXP). In Nitrobacter hamburgensis (strain DSM 10229 / NCIMB 13809 / X14), this protein is 1-deoxy-D-xylulose-5-phosphate synthase.